Consider the following 338-residue polypeptide: Holliday junction branch migration complex subunit RuvB (338 aa).

Residues 4-184 (ADRLMSAAAV…FGIVQRLEFY (181 aa)) are large ATPase domain (RuvB-L). Residues Ile23, Arg24, Gly65, Lys68, Thr69, Thr70, 131–133 (EDY), Arg174, Tyr184, and Arg221 each bind ATP. Position 69 (Thr69) interacts with Mg(2+). A small ATPAse domain (RuvB-S) region spans residues 185-255 (QTGDLQHIVS…VAVSALNMLN (71 aa)). The interval 258–338 (TEGFDFMDRK…GLEEHGGDPE (81 aa)) is head domain (RuvB-H). Positions 294, 313, and 318 each coordinate DNA.

The protein belongs to the RuvB family. Homohexamer. Forms an RuvA(8)-RuvB(12)-Holliday junction (HJ) complex. HJ DNA is sandwiched between 2 RuvA tetramers; dsDNA enters through RuvA and exits via RuvB. An RuvB hexamer assembles on each DNA strand where it exits the tetramer. Each RuvB hexamer is contacted by two RuvA subunits (via domain III) on 2 adjacent RuvB subunits; this complex drives branch migration. In the full resolvosome a probable DNA-RuvA(4)-RuvB(12)-RuvC(2) complex forms which resolves the HJ.

It is found in the cytoplasm. The enzyme catalyses ATP + H2O = ADP + phosphate + H(+). The RuvA-RuvB-RuvC complex processes Holliday junction (HJ) DNA during genetic recombination and DNA repair, while the RuvA-RuvB complex plays an important role in the rescue of blocked DNA replication forks via replication fork reversal (RFR). RuvA specifically binds to HJ cruciform DNA, conferring on it an open structure. The RuvB hexamer acts as an ATP-dependent pump, pulling dsDNA into and through the RuvAB complex. RuvB forms 2 homohexamers on either side of HJ DNA bound by 1 or 2 RuvA tetramers; 4 subunits per hexamer contact DNA at a time. Coordinated motions by a converter formed by DNA-disengaged RuvB subunits stimulates ATP hydrolysis and nucleotide exchange. Immobilization of the converter enables RuvB to convert the ATP-contained energy into a lever motion, pulling 2 nucleotides of DNA out of the RuvA tetramer per ATP hydrolyzed, thus driving DNA branch migration. The RuvB motors rotate together with the DNA substrate, which together with the progressing nucleotide cycle form the mechanistic basis for DNA recombination by continuous HJ branch migration. Branch migration allows RuvC to scan DNA until it finds its consensus sequence, where it cleaves and resolves cruciform DNA. This is Holliday junction branch migration complex subunit RuvB from Sodalis glossinidius (strain morsitans).